A 272-amino-acid polypeptide reads, in one-letter code: NH(3)-dependent NAD(+) synthetase (272 aa).

45–52 is a binding site for ATP; sequence GISGGQDS. D51 is a binding site for Mg(2+). R138 lines the deamido-NAD(+) pocket. T158 serves as a coordination point for ATP. Residue E163 participates in Mg(2+) binding. Deamido-NAD(+)-binding residues include K171 and D178. K187 and T209 together coordinate ATP. Residue 258-259 participates in deamido-NAD(+) binding; it reads HK.

Belongs to the NAD synthetase family. In terms of assembly, homodimer.

It catalyses the reaction deamido-NAD(+) + NH4(+) + ATP = AMP + diphosphate + NAD(+) + H(+). The protein operates within cofactor biosynthesis; NAD(+) biosynthesis; NAD(+) from deamido-NAD(+) (ammonia route): step 1/1. In terms of biological role, catalyzes the ATP-dependent amidation of deamido-NAD to form NAD. Uses ammonia as a nitrogen source. The protein is NH(3)-dependent NAD(+) synthetase of Bacillus cereus (strain AH187).